The chain runs to 148 residues: uncharacterized protein (148 aa).

Residues Met7–Leu29 traverse the membrane as a helical segment.

The protein localises to the membrane. This is an uncharacterized protein from Bacillus subtilis (strain 168).